A 316-amino-acid polypeptide reads, in one-letter code: Acetyl-coenzyme A carboxylase carboxyl transferase subunit alpha (316 aa).

Positions 39 to 293 (RLQDKSKALT…RGELLAQLKM (255 aa)) constitute a CoA carboxyltransferase C-terminal domain.

This sequence belongs to the AccA family. In terms of assembly, acetyl-CoA carboxylase is a heterohexamer composed of biotin carboxyl carrier protein (AccB), biotin carboxylase (AccC) and two subunits each of ACCase subunit alpha (AccA) and ACCase subunit beta (AccD).

Its subcellular location is the cytoplasm. The enzyme catalyses N(6)-carboxybiotinyl-L-lysyl-[protein] + acetyl-CoA = N(6)-biotinyl-L-lysyl-[protein] + malonyl-CoA. It functions in the pathway lipid metabolism; malonyl-CoA biosynthesis; malonyl-CoA from acetyl-CoA: step 1/1. In terms of biological role, component of the acetyl coenzyme A carboxylase (ACC) complex. First, biotin carboxylase catalyzes the carboxylation of biotin on its carrier protein (BCCP) and then the CO(2) group is transferred by the carboxyltransferase to acetyl-CoA to form malonyl-CoA. The polypeptide is Acetyl-coenzyme A carboxylase carboxyl transferase subunit alpha (Pseudomonas aeruginosa (strain UCBPP-PA14)).